We begin with the raw amino-acid sequence, 142 residues long: uncharacterized protein (142 aa).

This is an uncharacterized protein from Mycobacterium tuberculosis (strain CDC 1551 / Oshkosh).